Consider the following 596-residue polypeptide: Elongation factor 4 (596 aa).

A tr-type G domain is found at 2–183 (KNIRNFSIIA…AIITRIPAPN (182 aa)). GTP-binding positions include 14–19 (DHGKST) and 130–133 (NKID).

Belongs to the TRAFAC class translation factor GTPase superfamily. Classic translation factor GTPase family. LepA subfamily.

It localises to the cell inner membrane. The catalysed reaction is GTP + H2O = GDP + phosphate + H(+). Functionally, required for accurate and efficient protein synthesis under certain stress conditions. May act as a fidelity factor of the translation reaction, by catalyzing a one-codon backward translocation of tRNAs on improperly translocated ribosomes. Back-translocation proceeds from a post-translocation (POST) complex to a pre-translocation (PRE) complex, thus giving elongation factor G a second chance to translocate the tRNAs correctly. Binds to ribosomes in a GTP-dependent manner. This Campylobacter concisus (strain 13826) protein is Elongation factor 4.